A 425-amino-acid polypeptide reads, in one-letter code: MNLLIKGGRVIDPSQGIDDTLDVVVENGLVKEIGKGLATSAGAETIDASGKYVVPGLIDMHVHLRDPGLEYKEDIISGTRAAVAGGFTSVCCMPNTKPAIDNKAIASYIINKAKTEGACNVFPVGTITQGMHGDRLAEMGELKESGCVAVSDDGKPVKNSELMRRALQYAAGIGIMVISHAEELELVGEGVMNEGFTSTELGLKGIPRVAEDIATAREIMLAEYVGAPIHIAHVSTKGAVRIIREAKGRGVKVTCETAPHYFTLTDDAVRGYNTNAKMNPPLREADDLAAIKAGLKDGTIDCIATDHAPHHLDEKDVEFNEAMNGIVGLETSLPLSLKLVDEGVLNLSQLIEKMSCKPSELLGLGRGSLKAGNVADITVIDPAKQWTVTESALASKSKNSPWLGATMAGAAACTVVGGKIVFSGR.

Zn(2+)-binding residues include histidine 61 and histidine 63. Substrate is bound by residues 63-65 and asparagine 95; that span reads HLR. Zn(2+) is bound by residues aspartate 153, histidine 180, and histidine 233. Position 279 (asparagine 279) interacts with substrate. Aspartate 306 is a Zn(2+) binding site. Aspartate 306 is an active-site residue. Histidine 310 is a substrate binding site.

The protein belongs to the metallo-dependent hydrolases superfamily. DHOase family. Class I DHOase subfamily. Zn(2+) serves as cofactor.

The catalysed reaction is (S)-dihydroorotate + H2O = N-carbamoyl-L-aspartate + H(+). It participates in pyrimidine metabolism; UMP biosynthesis via de novo pathway; (S)-dihydroorotate from bicarbonate: step 3/3. Catalyzes the reversible cyclization of carbamoyl aspartate to dihydroorotate. This is Dihydroorotase from Trichlorobacter lovleyi (strain ATCC BAA-1151 / DSM 17278 / SZ) (Geobacter lovleyi).